We begin with the raw amino-acid sequence, 353 residues long: Carbamoyl phosphate synthase small chain (353 aa).

The segment at 1 to 166 (MSDAYLALET…AETHGNGDTT (166 aa)) is CPSase. Residues Ser45, Gly214, and Gly216 each coordinate L-glutamine. The region spanning 166-349 (TVALVDCGAK…LAMADASYTP (184 aa)) is the Glutamine amidotransferase type-1 domain. Residue Cys241 is the Nucleophile of the active site. The L-glutamine site is built by Leu242, Gln245, Asn283, Gly285, and Tyr286. Catalysis depends on residues His322 and Glu324.

The protein belongs to the CarA family. As to quaternary structure, composed of two chains; the small (or glutamine) chain promotes the hydrolysis of glutamine to ammonia, which is used by the large (or ammonia) chain to synthesize carbamoyl phosphate. Tetramer of heterodimers (alpha,beta)4.

It catalyses the reaction hydrogencarbonate + L-glutamine + 2 ATP + H2O = carbamoyl phosphate + L-glutamate + 2 ADP + phosphate + 2 H(+). It carries out the reaction L-glutamine + H2O = L-glutamate + NH4(+). It functions in the pathway amino-acid biosynthesis; L-arginine biosynthesis; carbamoyl phosphate from bicarbonate: step 1/1. It participates in pyrimidine metabolism; UMP biosynthesis via de novo pathway; (S)-dihydroorotate from bicarbonate: step 1/3. Small subunit of the glutamine-dependent carbamoyl phosphate synthetase (CPSase). CPSase catalyzes the formation of carbamoyl phosphate from the ammonia moiety of glutamine, carbonate, and phosphate donated by ATP, constituting the first step of 2 biosynthetic pathways, one leading to arginine and/or urea and the other to pyrimidine nucleotides. The small subunit (glutamine amidotransferase) binds and cleaves glutamine to supply the large subunit with the substrate ammonia. The polypeptide is Carbamoyl phosphate synthase small chain (Halobacterium salinarum (strain ATCC 29341 / DSM 671 / R1)).